Consider the following 506-residue polypeptide: RNA-splicing ligase RtcB homolog 1 (506 aa).

Residues Asp-120, Cys-123, His-228, His-260, and His-354 each contribute to the Mn(2+) site. 227-231 (NHYAE) lines the GMP pocket. Residues 354–355 (HN), 403–406 (GGSM), Ser-410, 429–432 (HGAG), and Lys-505 each bind GMP. Catalysis depends on His-429, which acts as the GMP-histidine intermediate.

It belongs to the RtcB family. As to quaternary structure, catalytic component of the tRNA-splicing ligase complex. Mn(2+) is required as a cofactor.

It carries out the reaction a 3'-end 3'-phospho-ribonucleotide-RNA + a 5'-end dephospho-ribonucleoside-RNA + GTP = a ribonucleotidyl-ribonucleotide-RNA + GMP + diphosphate. The catalysed reaction is a 3'-end 2',3'-cyclophospho-ribonucleotide-RNA + a 5'-end dephospho-ribonucleoside-RNA + GTP + H2O = a ribonucleotidyl-ribonucleotide-RNA + GMP + diphosphate + H(+). Catalytic subunit of the tRNA-splicing ligase complex that acts by directly joining spliced tRNA halves to mature-sized tRNAs by incorporating the precursor-derived splice junction phosphate into the mature tRNA as a canonical 3',5'-phosphodiester. May act as an RNA ligase with broad substrate specificity, and may function toward other RNAs. In Culex quinquefasciatus (Southern house mosquito), this protein is RNA-splicing ligase RtcB homolog 1.